The chain runs to 445 residues: Glutamyl-tRNA(Gln) amidotransferase subunit D (445 aa).

The Asparaginase/glutaminase domain occupies 93–425; it reads SEIKIISTGG…EKIRSLMISN (333 aa). Active-site residues include Thr-103, Thr-179, Asp-180, and Lys-258.

It belongs to the asparaginase 1 family. GatD subfamily. As to quaternary structure, heterodimer of GatD and GatE.

The enzyme catalyses L-glutamyl-tRNA(Gln) + L-glutamine + ATP + H2O = L-glutaminyl-tRNA(Gln) + L-glutamate + ADP + phosphate + H(+). Its function is as follows. Allows the formation of correctly charged Gln-tRNA(Gln) through the transamidation of misacylated Glu-tRNA(Gln) in organisms which lack glutaminyl-tRNA synthetase. The reaction takes place in the presence of glutamine and ATP through an activated gamma-phospho-Glu-tRNA(Gln). The GatDE system is specific for glutamate and does not act on aspartate. The polypeptide is Glutamyl-tRNA(Gln) amidotransferase subunit D (Saccharolobus islandicus (strain L.S.2.15 / Lassen #1) (Sulfolobus islandicus)).